We begin with the raw amino-acid sequence, 593 residues long: Scarecrow-like protein 1 (593 aa).

Disordered regions lie at residues 29 to 61 and 188 to 216; these read NPKL…PCLT and YQNE…SKEV. A compositionally biased stretch (polar residues) spans 35-48; it reads LNENGNNNGVSSAQ. Residues 202–211 are compositionally biased toward low complexity; sequence SSSADSNSHV. The region spanning 213-593 is the GRAS domain; sequence SKEVVSQATP…KSLIVASAWR (381 aa). The leucine repeat I (LRI) stretch occupies residues 220–280; sequence ATPKQILISC…AARMAASGKF (61 aa). The interval 299–364 is VHIID; it reads MQVLFEVCPC…GKRPRLRLTG (66 aa). Residues 330–334 carry the VHIID motif; it reads VHIID. Residues 380-411 are leucine repeat II (LRII); it reads IIGLRLEQLAEDNGVSFKFKAMPSKTSIVSPS. The interval 421–515 is PFYRE; that stretch reads LIVNFAFQLH…RQCLARDIVN (95 aa). An SAW region spans residues 518-593; the sequence is ACEGEERIER…KSLIVASAWR (76 aa).

Belongs to the GRAS family. Expressed in seedlings, roots, shoots, leaves, flowers and siliques.

The protein resides in the nucleus. Probable transcription factor involved in plant development. The polypeptide is Scarecrow-like protein 1 (SCL1) (Arabidopsis thaliana (Mouse-ear cress)).